The chain runs to 285 residues: Energy-coupling factor transporter ATP-binding protein EcfA2 (285 aa).

Residues 3–245 (INFEQVNFSY…DLVWFKTVAL (243 aa)) enclose the ABC transporter domain. Residue 40-47 (GQTGSGKS) coordinates ATP. E171 functions as the Proton acceptor in the catalytic mechanism.

The protein belongs to the ABC transporter superfamily. Energy-coupling factor EcfA family. As to quaternary structure, forms a stable energy-coupling factor (ECF) transporter complex probably composed of 2 membrane-embedded substrate-binding proteins (S component), 2 ATP-binding proteins (A component) and 2 transmembrane proteins (T component). This complex interacts with a number of substrate-specific components, including FolT, PanT and RibU for 5-formyltetrahydrofolate, pantothenate and riboflavin respectively.

The protein resides in the cell membrane. Functionally, ATP-binding (A) component of a common energy-coupling factor (ECF) ABC-transporter complex. Unlike classic ABC transporters this ECF transporter provides the energy necessary to transport a number of different substrates including 5-formyltetrahydrofolate, pantothenate and riboflavin. Expression of the complex plus FolT in E.coli allows 5-formyltetrahydrofolate uptake; 5-formyltetrahydrofolate is not taken up in the absence of FolT or the EcfA1A2T complex. In Leuconostoc mesenteroides subsp. mesenteroides (strain ATCC 8293 / DSM 20343 / BCRC 11652 / CCM 1803 / JCM 6124 / NCDO 523 / NBRC 100496 / NCIMB 8023 / NCTC 12954 / NRRL B-1118 / 37Y), this protein is Energy-coupling factor transporter ATP-binding protein EcfA2.